The sequence spans 3066 residues: Genome polyprotein (3066 aa).

The Peptidase S30 domain maps to 168 to 308 (TSQCRKPTYV…VENMEDIQHY (141 aa)). Catalysis depends on for P1 proteinase activity residues His-221, Glu-230, and Ser-262. An Involved in interaction with stylet and aphid transmission motif is present at residues 361 to 364 (KLSC). An Involved in virions binding and aphid transmission motif is present at residues 617–619 (PTK). The region spanning 643–765 (MYIAKEGFCY…QSEMKFYRVG (123 aa)) is the Peptidase C6 domain. Residues Cys-651 and His-724 each act as for helper component proteinase activity in the active site. The Helicase ATP-binding domain occupies 1236-1388 (LVATSSHTEF…TQHPVKLKVE (153 aa)). 1249 to 1256 (GAVGSGKS) is an ATP binding site. A DECH box motif is present at residues 1338-1341 (DECH). Residues 1407 to 1566 (DMIQHGNNLL…GLPVTTQSVS (160 aa)) form the Helicase C-terminal domain. Residues 1891 to 1900 (KKGKQKGSTR) carry the Nuclear localization signal motif. Tyr-1915 carries the post-translational modification O-(5'-phospho-RNA)-tyrosine. The Peptidase C4 domain maps to 2042–2260 (SKSVYKGLRD…IAWGSLNLVE (219 aa)). Residues His-2087, Asp-2122, and Cys-2192 each act as for nuclear inclusion protein A activity in the active site. Residues 2526 to 2650 (WVYCHADGSQ…AVSDKDTWLY (125 aa)) form the RdRp catalytic domain. The segment at 2799 to 2836 (SLQSGKEKEGDMDADKDPKKSTSSSKGAGTSSKDVNVG) is disordered. Residues 2803 to 2818 (GKEKEGDMDADKDPKK) show a composition bias toward basic and acidic residues. Over residues 2819–2831 (STSSSKGAGTSSK) the composition is skewed to low complexity. A Phosphothreonine modification is found at Thr-3048.

The protein belongs to the potyviridae genome polyprotein family. Interacts with host eIF4E protein (via cap-binding region); this interaction mediates the translation of the VPg-viral RNA conjugates. Part of a complex that comprises VPg, RNA, host EIF4E and EIF4G; this interaction mediates the translation of the VPg-viral RNA conjugates. As to quaternary structure, interacts with host eIF4E proteins in the host cytoplasm. VPg is uridylylated by the polymerase and is covalently attached to the 5'-end of the genomic RNA. This uridylylated form acts as a nucleotide-peptide primer for the polymerase. Post-translationally, potyviral RNA is expressed as two polyproteins which undergo post-translational proteolytic processing. Genome polyprotein is processed by NIa-pro, P1 and HC-pro proteinases resulting in the production of at least ten individual proteins. P3N-PIPO polyprotein is cleaved by P1 and HC-pro proteinases resulting in the production of three individual proteins. The P1 proteinase and the HC-pro cleave only their respective C-termini autocatalytically. 6K1 is essential for proper proteolytic separation of P3 from CI.

The protein localises to the host cytoplasmic vesicle. It is found in the host cytoplasm. Its subcellular location is the host nucleus. The protein resides in the virion. It catalyses the reaction RNA(n) + a ribonucleoside 5'-triphosphate = RNA(n+1) + diphosphate. The enzyme catalyses Hydrolyzes glutaminyl bonds, and activity is further restricted by preferences for the amino acids in P6 - P1' that vary with the species of potyvirus, e.g. Glu-Xaa-Xaa-Tyr-Xaa-Gln-|-(Ser or Gly) for the enzyme from tobacco etch virus. The natural substrate is the viral polyprotein, but other proteins and oligopeptides containing the appropriate consensus sequence are also cleaved.. The catalysed reaction is Hydrolyzes a Gly-|-Gly bond at its own C-terminus, commonly in the sequence -Tyr-Xaa-Val-Gly-|-Gly, in the processing of the potyviral polyprotein.. Functionally, required for aphid transmission and also has proteolytic activity. Only cleaves a Gly-Gly dipeptide at its own C-terminus. Interacts with virions and aphid stylets. Acts as a suppressor of RNA-mediated gene silencing, also known as post-transcriptional gene silencing (PTGS), a mechanism of plant viral defense that limits the accumulation of viral RNAs. May have RNA-binding activity. Its function is as follows. Has helicase activity. It may be involved in replication. Indispensable for virus replication. Reduces the abundance of host transcripts related to jasmonic acid biosynthesis therefore altering the host defenses. In order to increase its own stability, decreases host protein degradation pathways. In terms of biological role, indispensable for virus replication. Functionally, mediates the cap-independent, EIF4E-dependent translation of viral genomic RNAs. Binds to the cap-binding site of host EIF4E and thus interferes with the host EIF4E-dependent mRNA export and translation. VPg-RNA directly binds EIF4E and is a template for transcription. Also forms trimeric complexes with EIF4E-EIF4G, which are templates for translation. Its function is as follows. Has RNA-binding and proteolytic activities. An RNA-dependent RNA polymerase that plays an essential role in the virus replication. In terms of biological role, involved in aphid transmission, cell-to-cell and systemis movement, encapsidation of the viral RNA and in the regulation of viral RNA amplification. In Glycine max (Soybean), this protein is Genome polyprotein.